Here is a 30-residue protein sequence, read N- to C-terminus: 80 kDa carcinoembryonic antigen-binding protein (30 aa).

In terms of assembly, binds to carcinoembryonic antigen (CEA). Post-translationally, the N-terminus is blocked.

The protein localises to the cell membrane. May play a role in the development of hepatic metastases from colorectal cancers. This chain is 80 kDa carcinoembryonic antigen-binding protein, found in Rattus norvegicus (Rat).